We begin with the raw amino-acid sequence, 422 residues long: DNA (cytosine-5)-methyltransferase 3-like (422 aa).

The span at 1-11 shows a compositional bias: polar residues; it reads MGSRETPSSCS. Positions 1 to 50 are disordered; it reads MGSRETPSSCSKTHETLNLETPESSSTDPDSPLEEQWPKSAPDLKEEDSM. Over residues 20-30 the composition is skewed to low complexity; the sequence is ETPESSSTDPD. In terms of domain architecture, ADD spans 76–208; the sequence is EVNVNQRNIE…LKAFHDREGA (133 aa). The segment at 87–117 adopts a GATA-type; atypical zinc-finger fold; sequence ICLCCGSLQVYAQHPLFEGGICAPCKDKFLE. The segment at 128–184 adopts a PHD-type; atypical zinc-finger fold; sequence QSYCTICCSGHTLFICESPDCTRCYCFECVDILVGPGTSERINAMACWVCFLCLPFS.

In terms of assembly, homodimer. Heterotetramer composed of 1 DNMT3A homodimer and 2 DNMT3L subunits (DNMT3L-DNMT3A-DNMT3A-DNMT3L). Interacts with histone H3 (via N-terminus); interaction is strongly inhibited by methylation at lysine 4 (H3K4me). Interacts with EZH2; the interaction is direct. Interacts with SPOCD1.

It is found in the nucleus. Its function is as follows. Catalytically inactive regulatory factor of DNA methyltransferases that can either promote or inhibit DNA methylation depending on the context. Essential for the function of DNMT3A and DNMT3B: activates DNMT3A and DNMT3B by binding to their catalytic domain. Acts by accelerating the binding of DNA and S-adenosyl-L-methionine (AdoMet) to the methyltransferases and dissociates from the complex after DNA binding to the methyltransferases. Recognizes unmethylated histone H3 lysine 4 (H3K4me0) and induces de novo DNA methylation by recruitment or activation of DNMT3. Plays a key role in embryonic stem cells and germ cells. In germ cells, required for the methylation of imprinted loci together with DNMT3A. In male germ cells, specifically required to methylate retrotransposons, preventing their mobilization. Plays a key role in embryonic stem cells (ESCs) by acting both as an positive and negative regulator of DNA methylation. While it promotes DNA methylation of housekeeping genes together with DNMT3A and DNMT3B, it also acts as an inhibitor of DNA methylation at the promoter of bivalent genes. Interacts with the EZH2 component of the PRC2/EED-EZH2 complex, preventing interaction of DNMT3A and DNMT3B with the PRC2/EED-EZH2 complex, leading to maintain low methylation levels at the promoters of bivalent genes. Promotes differentiation of ESCs into primordial germ cells by inhibiting DNA methylation at the promoter of RHOX5, thereby activating its expression. The chain is DNA (cytosine-5)-methyltransferase 3-like (Dnmt3l) from Rattus norvegicus (Rat).